A 306-amino-acid chain; its full sequence is Oligopeptide transport system permease protein OppB (306 aa).

At 1–11 (MLKFILRRCLE) the chain is on the cytoplasmic side. The helical transmembrane segment at 12 to 32 (AIPTLFILITISFFMMRLAPG) threads the bilayer. At 33–99 (SPFTGERTLP…VASSFPVSAK (67 aa)) the chain is on the periplasmic side. One can recognise an ABC transmembrane type-1 domain in the interval 94 to 293 (FPVSAKLGAA…ALTILFNAIV (200 aa)). The helical transmembrane segment at 100–120 (LGAAAFFLAVILGVSAGVIAA) threads the bilayer. Over 121–137 (LKQNTKWDYTVMGLAMT) the chain is Cytoplasmic. A helical transmembrane segment spans residues 138-158 (GVVIPSFVVAPLLVMIFAIIL). At 159 to 169 (HWLPGGGWNGG) the chain is on the periplasmic side. The chain crosses the membrane as a helical span at residues 170–190 (ALKFMILPMVALSLAYIASIA). Residues 191–229 (RITRGSMIEVLHSNFIRTARAKGLPMRRIILRHALKPAL) lie on the Cytoplasmic side of the membrane. A helical transmembrane segment spans residues 230-250 (LPVLSYMGPAFVGIITGSMVI). Topologically, residues 251-279 (ETIYGLPGIGQLFVNGALNRDYSLVLSLT) are periplasmic. A helical transmembrane segment spans residues 280-300 (ILVGALTILFNAIVDVLYAVI). The Cytoplasmic portion of the chain corresponds to 301–306 (DPKIRY).

This sequence belongs to the binding-protein-dependent transport system permease family. OppBC subfamily. In terms of assembly, the complex is composed of two ATP-binding proteins (OppD and OppF), two transmembrane proteins (OppB and OppC) and a solute-binding protein (OppA).

The protein resides in the cell inner membrane. Part of the ABC transporter complex OppABCDF involved in the uptake of oligopeptides. Probably responsible for the translocation of the substrate across the membrane. In Shigella flexneri, this protein is Oligopeptide transport system permease protein OppB (oppB).